The primary structure comprises 332 residues: Glycerol-3-phosphate dehydrogenase [NAD(P)+] (332 aa).

Trp11, Arg30, and Lys108 together coordinate NADPH. The sn-glycerol 3-phosphate site is built by Lys108, Gly137, and Ser139. Ala141 serves as a coordination point for NADPH. Residues Lys192, Asp245, Ser255, Arg256, and Asn257 each coordinate sn-glycerol 3-phosphate. Lys192 serves as the catalytic Proton acceptor. Arg256 provides a ligand contact to NADPH. Val280 and Glu282 together coordinate NADPH.

It belongs to the NAD-dependent glycerol-3-phosphate dehydrogenase family.

It localises to the cytoplasm. The catalysed reaction is sn-glycerol 3-phosphate + NAD(+) = dihydroxyacetone phosphate + NADH + H(+). It carries out the reaction sn-glycerol 3-phosphate + NADP(+) = dihydroxyacetone phosphate + NADPH + H(+). It participates in membrane lipid metabolism; glycerophospholipid metabolism. Catalyzes the reduction of the glycolytic intermediate dihydroxyacetone phosphate (DHAP) to sn-glycerol 3-phosphate (G3P), the key precursor for phospholipid synthesis. The protein is Glycerol-3-phosphate dehydrogenase [NAD(P)+] of Burkholderia mallei (strain ATCC 23344).